We begin with the raw amino-acid sequence, 347 residues long: Quinolinate synthase (347 aa).

Positions 47 and 68 each coordinate iminosuccinate. Cys113 serves as a coordination point for [4Fe-4S] cluster. Residues Tyr139–Asn141 and Ser156 contribute to the iminosuccinate site. Cys200 contributes to the [4Fe-4S] cluster binding site. Residues His226–Glu228 and Thr243 each bind iminosuccinate. Cys297 contributes to the [4Fe-4S] cluster binding site.

It belongs to the quinolinate synthase family. Type 1 subfamily. It depends on [4Fe-4S] cluster as a cofactor.

It localises to the cytoplasm. It catalyses the reaction iminosuccinate + dihydroxyacetone phosphate = quinolinate + phosphate + 2 H2O + H(+). The protein operates within cofactor biosynthesis; NAD(+) biosynthesis; quinolinate from iminoaspartate: step 1/1. Catalyzes the condensation of iminoaspartate with dihydroxyacetone phosphate to form quinolinate. In Enterobacter sp. (strain 638), this protein is Quinolinate synthase.